The primary structure comprises 539 residues: MDLGALLDELESGDQELVQKSLAEYNQENSQCFFFNAEQREERKKLGELVISFLNRDLQPSCQIACLETIRILSRDKYALSPFTGRSAIQTLAQYAGLDYSEEMEMPCIPDGESAVEALKGLCNIIYNSVEAQEVAKDLRLVCGLARRLKLYNETRSSHESKFFDLRLLFLLTALSVDMRRQLAQELRGVSLLTDALESTLALKWSDIYEVVTDHLAPPLGKEETERVMEILKALFNITFDISRREVDEEEAALYRHLAAILRHCLLRQSDGEDRTEEFHGHTVNLLVNLPLMCLDVLLTPKVEQGSVEYMGMNMDTVEVLLQFLHRRLDRGHKLREMLTPVLNLLTESSRVHRETRKFLRAKVLPPLRDVKNRPEVGNTLRNKLVRLMTHVDTDVKHCAAEFLFVLCKENVSRFVKYTGYGNAAGLLAARGLLAGGRGEGCYSEDDDTDTEEYREAKANINPVTGRVEEKQPNPMDGMTEEQKEYEAMKLVNMFDKLSREQIIQPMGVTSDGRLGPLDEAAQKMLQRQESSDLDSDSD.

A disordered region spans residues 506–539 (PMGVTSDGRLGPLDEAAQKMLQRQESSDLDSDSD).

This sequence belongs to the synembryn family.

Its subcellular location is the cytoplasm. The protein localises to the cell cortex. Its function is as follows. Chaperone that specifically binds and folds nascent G alpha proteins prior to G protein heterotrimer formation, promoting their stability and activity: folds GNAI1, GNAO1, GNA13 and GNAQ. Does not fold G(s) G-alpha proteins GNAS nor GNAL. Also acts as a guanine nucleotide exchange factor (GEF) for G alpha proteins by stimulating exchange of bound GDP for free GTP. The chain is Chaperone Ric-8A (ric8a) from Xenopus laevis (African clawed frog).